A 305-amino-acid chain; its full sequence is UDP-3-O-acyl-N-acetylglucosamine deacetylase (305 aa).

Residues H79, H238, and D242 each coordinate Zn(2+). H265 (proton donor) is an active-site residue.

It belongs to the LpxC family. The cofactor is Zn(2+).

The catalysed reaction is a UDP-3-O-[(3R)-3-hydroxyacyl]-N-acetyl-alpha-D-glucosamine + H2O = a UDP-3-O-[(3R)-3-hydroxyacyl]-alpha-D-glucosamine + acetate. Its pathway is glycolipid biosynthesis; lipid IV(A) biosynthesis; lipid IV(A) from (3R)-3-hydroxytetradecanoyl-[acyl-carrier-protein] and UDP-N-acetyl-alpha-D-glucosamine: step 2/6. Functionally, catalyzes the hydrolysis of UDP-3-O-myristoyl-N-acetylglucosamine to form UDP-3-O-myristoylglucosamine and acetate, the committed step in lipid A biosynthesis. This is UDP-3-O-acyl-N-acetylglucosamine deacetylase from Histophilus somni (strain 129Pt) (Haemophilus somnus).